A 221-amino-acid polypeptide reads, in one-letter code: 2-C-methyl-D-erythritol 4-phosphate cytidylyltransferase (221 aa).

Belongs to the IspD/TarI cytidylyltransferase family. IspD subfamily.

It carries out the reaction 2-C-methyl-D-erythritol 4-phosphate + CTP + H(+) = 4-CDP-2-C-methyl-D-erythritol + diphosphate. The protein operates within isoprenoid biosynthesis; isopentenyl diphosphate biosynthesis via DXP pathway; isopentenyl diphosphate from 1-deoxy-D-xylulose 5-phosphate: step 2/6. Functionally, catalyzes the formation of 4-diphosphocytidyl-2-C-methyl-D-erythritol from CTP and 2-C-methyl-D-erythritol 4-phosphate (MEP). This Roseobacter denitrificans (strain ATCC 33942 / OCh 114) (Erythrobacter sp. (strain OCh 114)) protein is 2-C-methyl-D-erythritol 4-phosphate cytidylyltransferase.